The primary structure comprises 428 residues: C4-dicarboxylate transport protein (428 aa).

A run of 9 helical transmembrane segments spans residues 8–28 (SLYFQVLTAIAIGILLGHFYP), 44–64 (LIKMIIAPVIFCTVVTGIAGM), 76–96 (VALLYFEIVSTIALIIGLVIV), 142–162 (IGAFASGNILQVLLFAVLFGF), 184–204 (VIFGIINMIMRLAPIGAFGAM), 222–242 (LIVCFYITCILFVVVVLGSIA), 289–309 (VVGLVIPTGYSFNLDGTSIYL), 326–346 (IFHQITLLVVLLLSSKGAAGV), and 352–372 (IVLAATISAVGHLPVAGLALI).

The protein belongs to the dicarboxylate/amino acid:cation symporter (DAACS) (TC 2.A.23) family.

Its subcellular location is the cell inner membrane. Functionally, responsible for the transport of dicarboxylates such as succinate, fumarate, and malate from the periplasm across the membrane. The protein is C4-dicarboxylate transport protein of Cronobacter sakazakii (strain ATCC BAA-894) (Enterobacter sakazakii).